The following is a 329-amino-acid chain: Helicase VP6-A (329 aa).

Disordered regions lie at residues 27-130 (INLV…TNGG) and 189-232 (DLRR…SEEP). 3 stretches are compositionally biased toward basic and acidic residues: residues 36 to 58 (EGGK…KDGE), 65 to 83 (GQKE…DRRI), and 96 to 109 (SGER…RGDG). An ATP-binding site is contributed by K110. A compositionally biased stretch (gly residues) spans 110–129 (KVGGGGGDADAGVGATGTNG). Composition is skewed to basic and acidic residues over residues 189 to 207 (DLRR…ERGG) and 215 to 232 (HGDA…SEEP).

The protein belongs to the reoviruses VP6 family. Homohexamer.

It localises to the virion. The enzyme catalyses ATP + H2O = ADP + phosphate + H(+). ATP dependent RNA helicase essential for RNA packaging and viral transcription. Possesses ss- and dsRNA-binding capacity. The polypeptide is Helicase VP6-A (Segment-9) (Antilocapra americana (Pronghorn)).